The chain runs to 169 residues: Large ribosomal subunit protein bL17 (169 aa).

Positions 124 to 169 are disordered; sequence EKAVKRQDRSRRVKGSKKAIDEKTSDDSASVEAAPAAPEAEEKKDA. Residues 131 to 140 are compositionally biased toward basic residues; the sequence is DRSRRVKGSK. Residues 150 to 161 show a composition bias toward low complexity; that stretch reads DSASVEAAPAAP.

The protein belongs to the bacterial ribosomal protein bL17 family. Part of the 50S ribosomal subunit. Contacts protein L32.

The chain is Large ribosomal subunit protein bL17 from Chloroherpeton thalassium (strain ATCC 35110 / GB-78).